The sequence spans 160 residues: Major pollen allergen Bet v 1-G (160 aa).

Positions 55, 82, 84, and 101 each coordinate brassinolide.

It belongs to the BetVI family.

The protein localises to the cytoplasm. Its function is as follows. May be a general steroid carrier protein. The protein is Major pollen allergen Bet v 1-G (BETV1G) of Betula pendula (European white birch).